Reading from the N-terminus, the 151-residue chain is MERPEQELIRQSWRAVSRSPLEHGTVLFARLFDLEPDLLPLFQYNCRQFSSPEDCLSSPEFLDHIRKVMLVIDAAVTNVEDLSSLEEYLAGLGRKHRAVGVRFSSFSTVGESLLYMLEKCLGPAFTPATRAAWSQLYGAVVQAMSRGWDGE.

The Globin domain occupies 1–149; the sequence is MERPEQELIR…VVQAMSRGWD (149 aa). Positions 64 and 96 each coordinate heme b.

This sequence belongs to the globin family. As to quaternary structure, monomer. Homodimer and homotetramer; disulfide-linked. Mainly monomeric but also detected as part of homodimers and homotetramers. Interacts with 14-3-3 proteins; regulates the phosphorylation of NGB. Could interact (ferrous form) with G-alpha(i) proteins (GTP-bound form). In terms of processing, phosphorylated during hypoxia by ERK1/ERK2. Phosphorylation regulates the heme pocket hexacoordination preventing the association of His-64 with the heme metal center. Thereby, promotes the access of dioxygen and nitrite to the heme and stimulates the nitrite reductase activity. Phosphorylation during hypoxia is stabilized by 14-3-3 proteins.

Its subcellular location is the cytoplasm. The protein localises to the cytosol. It is found in the mitochondrion matrix. It catalyses the reaction Fe(III)-heme b-[protein] + nitric oxide + H2O = Fe(II)-heme b-[protein] + nitrite + 2 H(+). Monomeric globin with a bis-histidyl six-coordinate heme-iron atom through which it can bind dioxygen, carbon monoxide and nitric oxide. Could help transport oxygen and increase its availability to the metabolically active neuronal tissues, though its low quantity in tissues as well as its high affinity for dioxygen, which may limit its oxygen-releasing ability, argue against it. The ferrous/deoxygenated form exhibits a nitrite reductase activity and it could produce nitric oxide which in turn inhibits cellular respiration in response to hypoxia. In its ferrous/deoxygenated state, it may also exhibit GDI (Guanine nucleotide Dissociation Inhibitor) activity toward heterotrimeric G-alpha proteins, thereby regulating signal transduction to facilitate neuroprotective responses in the wake of hypoxia and associated oxidative stress. This Oryctolagus cuniculus (Rabbit) protein is Neuroglobin.